The chain runs to 643 residues: Fructose-1,6-bisphosphatase class 3 (643 aa).

Belongs to the FBPase class 3 family. Mn(2+) serves as cofactor.

It carries out the reaction beta-D-fructose 1,6-bisphosphate + H2O = beta-D-fructose 6-phosphate + phosphate. Its pathway is carbohydrate biosynthesis; gluconeogenesis. The sequence is that of Fructose-1,6-bisphosphatase class 3 from Lacticaseibacillus casei (strain BL23) (Lactobacillus casei).